The following is a 130-amino-acid chain: Cytochrome c-type biogenesis protein CcmE (130 aa).

Over 1–7 the chain is Cytoplasmic; sequence MKKKHKR. The helical; Signal-anchor for type II membrane protein transmembrane segment at 8 to 28 threads the bilayer; it reads LLITSGIFCFLSCAVFFILTT. Topologically, residues 29-130 are extracellular; it reads LKENISFFYT…DENYMPKVLK (102 aa). Residues H120 and Y124 each contribute to the heme site.

It belongs to the CcmE/CycJ family.

It localises to the cell membrane. Functionally, heme chaperone required for the biogenesis of c-type cytochromes. Transiently binds heme delivered by CcmC and transfers the heme to apo-cytochromes in a process facilitated by CcmF and CcmH. The chain is Cytochrome c-type biogenesis protein CcmE from Wolbachia pipientis wMel.